The primary structure comprises 592 residues: Aspartate--tRNA(Asp/Asn) ligase (592 aa).

An L-aspartate-binding site is contributed by glutamate 175. Residues 199–202 (QLFK) form an aspartate region. An L-aspartate-binding site is contributed by arginine 221. ATP-binding positions include 221–223 (RDE) and glutamine 230. Histidine 447 serves as a coordination point for L-aspartate. Position 481 (glutamate 481) interacts with ATP. Arginine 488 is an L-aspartate binding site. 533 to 536 (GIDR) contributes to the ATP binding site.

This sequence belongs to the class-II aminoacyl-tRNA synthetase family. Type 1 subfamily. In terms of assembly, homodimer.

It is found in the cytoplasm. The enzyme catalyses tRNA(Asx) + L-aspartate + ATP = L-aspartyl-tRNA(Asx) + AMP + diphosphate. Aspartyl-tRNA synthetase with relaxed tRNA specificity since it is able to aspartylate not only its cognate tRNA(Asp) but also tRNA(Asn). Reaction proceeds in two steps: L-aspartate is first activated by ATP to form Asp-AMP and then transferred to the acceptor end of tRNA(Asp/Asn). This chain is Aspartate--tRNA(Asp/Asn) ligase, found in Dictyoglomus turgidum (strain DSM 6724 / Z-1310).